The sequence spans 496 residues: Solute carrier family 2, facilitated glucose transporter member 3 (496 aa).

At 1-10 (MGTQKVTPAL) the chain is on the cytoplasmic side. The chain crosses the membrane as a helical span at residues 11 to 32 (IFAITVATIGSFQFGYNTGVIN). At 33 to 64 (APEKIIKEFINKTLTDKGNAPPSEVLLTSLWS) the chain is on the extracellular side. An N-linked (GlcNAc...) asparagine glycan is attached at Asn43. Residues 65 to 85 (LSVAIFSVGGMIGSFSVGLFV) form a helical membrane-spanning segment. The Cytoplasmic segment spans residues 86–90 (NRFGR). A helical membrane pass occupies residues 91 to 111 (RNSMLIVNLLAVTGGCFMGLC). Residues 112-118 (KVAKSVE) lie on the Extracellular side of the membrane. A helical membrane pass occupies residues 119–142 (MLILGRLVIGLFCGLCTGFVPMYI). Over 143 to 153 (GEISPTALRGA) the chain is Cytoplasmic. Residues 154–174 (FGTLNQLGIVVGILVAQIFGL) traverse the membrane as a helical segment. Gln159 serves as a coordination point for D-glucose. The Extracellular portion of the chain corresponds to 175–183 (EFILGSEEL). A helical transmembrane segment spans residues 184–204 (WPLLLGFTILPAILQSAALPF). The Cytoplasmic segment spans residues 205 to 269 (CPESPRFLLI…LFRVSSYRQP (65 aa)). The residue at position 232 (Thr232) is a Phosphothreonine. A helical transmembrane segment spans residues 270 to 290 (IIISIVLQLSQQLSGINAVFY). The important for selectivity against fructose stretch occupies residues 277-279 (QLS). D-glucose is bound by residues 280–281 (QQ) and Asn286. Residues 291-304 (YSTGIFKDAGVQEP) lie on the Extracellular side of the membrane. A helical transmembrane segment spans residues 305–325 (IYATIGAGVVNTIFTVVSLFL). Asn315 contacts D-glucose. At 326–331 (VERAGR) the chain is on the cytoplasmic side. Residues 332–352 (RTLHMIGLGGMAFCSTLMTVS) traverse the membrane as a helical segment. Over 353-363 (LLLKDNYNGMS) the chain is Extracellular. Residues 364–389 (FVCIGAILVFVAFFEIGPGPIPWFIV) form a helical membrane-spanning segment. Glu378 and Trp386 together coordinate D-glucose. Over 390–399 (AELFSQGPRP) the chain is Cytoplasmic. A helical membrane pass occupies residues 400–420 (AAMAVAGCSNWTSNFLVGLLF). Residues 421–429 (PSAAHYLGA) are Extracellular-facing. A helical membrane pass occupies residues 430 to 450 (YVFIIFTGFLITFLAFTFFKV). At 451 to 496 (PETRGRTFEDITRAFEGQAHGADRSGKDGVMEMNSIEPAKETTTNV) the chain is on the cytoplasmic side. Ser475 and Ser485 each carry phosphoserine. Residue Thr492 is modified to Phosphothreonine.

The protein belongs to the major facilitator superfamily. Sugar transporter (TC 2.A.1.1) family. Glucose transporter subfamily. In terms of assembly, interacts with SMIM43; the interaction may promote SLC2A3-mediated glucose transport to meet the energy needs of mesendoderm differentiation. Highly expressed in brain. Expressed in many tissues.

The protein localises to the cell membrane. The protein resides in the perikaryon. It is found in the cell projection. It catalyses the reaction D-glucose(out) = D-glucose(in). The catalysed reaction is D-galactose(in) = D-galactose(out). Deoxyglucose transport is inhibited by D-glucose, D-galactose and maltose. Galactose transport is inhibited by D-glucose and maltose. Its function is as follows. Facilitative glucose transporter. Can also mediate the uptake of various other monosaccharides across the cell membrane. Mediates the uptake of glucose, 2-deoxyglucose, galactose, mannose, xylose and fucose, and probably also dehydroascorbate. Does not mediate fructose transport. Required for mesendoderm differentiation. This chain is Solute carrier family 2, facilitated glucose transporter member 3, found in Homo sapiens (Human).